The chain runs to 430 residues: 3-phosphoshikimate 1-carboxyvinyltransferase (430 aa).

3 residues coordinate 3-phosphoshikimate: lysine 20, serine 21, and arginine 25. Residue lysine 20 coordinates phosphoenolpyruvate. Glycine 90 and arginine 118 together coordinate phosphoenolpyruvate. Positions 163, 164, 165, 191, 311, and 338 each coordinate 3-phosphoshikimate. A phosphoenolpyruvate-binding site is contributed by glutamine 165. The active-site Proton acceptor is aspartate 311. 2 residues coordinate phosphoenolpyruvate: arginine 342 and arginine 383.

The protein belongs to the EPSP synthase family. Monomer.

Its subcellular location is the cytoplasm. The enzyme catalyses 3-phosphoshikimate + phosphoenolpyruvate = 5-O-(1-carboxyvinyl)-3-phosphoshikimate + phosphate. It functions in the pathway metabolic intermediate biosynthesis; chorismate biosynthesis. Catalyzes the transfer of the enolpyruvyl moiety of phosphoenolpyruvate (PEP) to the 5-hydroxyl of shikimate-3-phosphate (S3P) to produce enolpyruvyl shikimate-3-phosphate and inorganic phosphate. In Methanosarcina mazei (strain ATCC BAA-159 / DSM 3647 / Goe1 / Go1 / JCM 11833 / OCM 88) (Methanosarcina frisia), this protein is 3-phosphoshikimate 1-carboxyvinyltransferase.